The primary structure comprises 504 residues: DnaJ homolog subfamily C member 3 (504 aa).

The N-terminal stretch at 1–31 is a signal peptide; that stretch reads MVAPGSVRSRLGAVFPFLLVLVDLQYEGAEC. TPR repeat units follow at residues 37–70, 72–104, 105–138, 154–187, 188–221, 222–255, 268–301, 306–339, and 340–373; these read VEKH…DPDN, IAYY…KMDF, TAAR…NPSE, MQRL…CVWD, AELR…KNDN, TEAF…DQDH, LNKL…EPSV, VRSK…EPDN, and VNAL…NEND. C248 and C258 form a disulfide bridge. S274 is modified (phosphoserine). Residues C313 and C329 are joined by a disulfide bond. Residues 375 to 393 form a flexible linker region; that stretch reads QIREGLEKAQRLLKQSQKR. A J domain is found at 394–462; that stretch reads DYYKILGVKR…EMRRKFDDGE (69 aa). The interval 451 to 481 is disordered; the sequence is DPEMRRKFDDGEDPLDAETQQGGGSNPFHRS. A Phosphoserine modification is found at S475.

As to quaternary structure, interacts with EIF2AK2 and EIF2AK3. Forms a trimeric complex with DNAJB1 and HSPA8. Interacts with THAP12.

Its subcellular location is the endoplasmic reticulum. Its function is as follows. Involved in the unfolded protein response (UPR) during ER stress. Co-chaperone of HSPA8/HSC70, it stimulates its ATPase activity. May inhibit both the autophosphorylation of EIF2AK2/PKR and the ability of EIF2AK2 to catalyze phosphorylation of the EIF2A. May inhibit EIF2AK3/PERK activity. This chain is DnaJ homolog subfamily C member 3 (Dnajc3), found in Rattus norvegicus (Rat).